A 382-amino-acid chain; its full sequence is MKKIPSFLQMYSALIASPTMSSIDPHFDQSNRTLIELLANWLSSLGFRTEVIPLEGSRDKFNLLATYGEGEGGLLLAGHTDTVPFDEGRWQFDPFKLTEKDGKFYGLGTADMKGFFAFVIDAVSQLDLTRLTKPLRILATADEETTMLGARTFIQHSHIRPDCAIIGEPTSLKPIRAHKGHVGEALRITGKSGHSSDPSKGINAIELMHEATGYLMQMRDELRQKYHHAAFNIPYPTMNFGAISGGDAVNRICACCELHFDIRPLPNLRLTDLNEMLQAKLAPMFEKWGGRISLQALHDPIPGYECAHSAQVVQVVEKLLGEQCETVNYCTEAPFIQQLCPTLVLGPGSIEQAHQPDEFLSAEFIDPTRELLSKLIGQFCTG.

Residue H79 coordinates Zn(2+). D81 is an active-site residue. D111 is a binding site for Zn(2+). Residue E143 is part of the active site. Positions 144, 168, and 354 each coordinate Zn(2+).

The protein belongs to the peptidase M20A family. ArgE subfamily. In terms of assembly, homodimer. Zn(2+) is required as a cofactor. It depends on Co(2+) as a cofactor. The cofactor is glutathione.

The protein localises to the cytoplasm. The catalysed reaction is N(2)-acetyl-L-ornithine + H2O = L-ornithine + acetate. It functions in the pathway amino-acid biosynthesis; L-arginine biosynthesis; L-ornithine from N(2)-acetyl-L-ornithine (linear): step 1/1. Functionally, catalyzes the hydrolysis of the amide bond of N(2)-acetylated L-amino acids. Cleaves the acetyl group from N-acetyl-L-ornithine to form L-ornithine, an intermediate in L-arginine biosynthesis pathway, and a branchpoint in the synthesis of polyamines. The sequence is that of Acetylornithine deacetylase from Pasteurella multocida (strain Pm70).